A 116-amino-acid chain; its full sequence is Protein RALF-like 33 (116 aa).

Residues 1-23 form the signal peptide; it reads MRGLSTKPVAIIIAILTVHFLFA. Positions 24–67 are cleaved as a propeptide — removed in mature form; that stretch reads AVTSQSSGDFVPIESKCNGTIAECSLSTAEEEFEMDSEINRRIL. N-linked (GlcNAc...) asparagine glycosylation is present at Asn41. Intrachain disulfides connect Cys85–Cys95 and Cys108–Cys114.

This sequence belongs to the plant rapid alkalinization factor (RALF) family. In terms of processing, proteolytically cleaved, probably by S1P, a subtilisin-like serine protease (subtilase). Expressed in roots, stems, leaves and plants.

Its subcellular location is the secreted. In terms of biological role, cell signaling peptide that may regulate plant stress, growth, and development. Mediates a rapid alkalinization of extracellular space by mediating a transient increase in the cytoplasmic Ca(2+) concentration leading to a calcium-dependent signaling events through a cell surface receptor and a concomitant activation of some intracellular mitogen-activated protein kinases. The sequence is that of Protein RALF-like 33 (RALFL33) from Arabidopsis thaliana (Mouse-ear cress).